A 282-amino-acid chain; its full sequence is Putative dolichyldiphosphatase (282 aa).

2 helical membrane passes run 26 to 46 (LLCA…ATLI) and 93 to 113 (MPSS…LFLL). A disordered region spans residues 121-153 (QQQQQQQKQKQRERKKQVTNVKTTTTNGSGNGS). Over residues 138–148 (VTNVKTTTTNG) the composition is skewed to low complexity. The next 2 helical transmembrane spans lie at 173–193 (WSFA…GAVA) and 207–227 (VLVG…VTHV).

The protein belongs to the dolichyldiphosphatase family.

The protein localises to the endoplasmic reticulum membrane. The enzyme catalyses a di-trans,poly-cis-dolichyl diphosphate + H2O = a di-trans,poly-cis-dolichyl phosphate + phosphate + H(+). The protein operates within protein modification; protein glycosylation. This Neurospora crassa (strain ATCC 24698 / 74-OR23-1A / CBS 708.71 / DSM 1257 / FGSC 987) protein is Putative dolichyldiphosphatase.